The following is a 194-amino-acid chain: MTGIMDSVEMPKLPENQKTFAGIPEAVFLEEIDTFMSQPENENCEKVLQRLDEQHGKYRFMACNLEARRRKLKSQIPDLERSLEMVNVLRKEDEERETQFLLSDQVFIKTLVPPTKTVYLWLGASVMLEYPLDEAEALLNQNITSAVGNLKSVEHDQDFLRDQITTTEVNMARVYNWGVKKRQAATKTTATTPS.

Belongs to the prefoldin subunit alpha family. Heterohexamer of two PFD-alpha type and four PFD-beta type subunits. Interacts with itself. Interacts with Vhl and betaTub56D/tubulin beta-1 chain. Interacts with tubulin alpha-beta heterodimers by itself or in complex with Vhl. Does not interact with microtubules (MTs). In terms of tissue distribution, expressed in larval central nervous system (CNS) and pupal testis (at protein level).

Its subcellular location is the cytoplasm. Its function is as follows. Binds specifically to cytosolic chaperonin (c-CPN) and transfers target proteins to it. Binds to nascent polypeptide chain and promotes folding in an environment in which there are many competing pathways for nonnative proteins. Required for tubulin stability and spindle and centrosome formation in cooperation with Vhl. The chain is Prefoldin subunit 3 (mgr) from Drosophila melanogaster (Fruit fly).